A 379-amino-acid polypeptide reads, in one-letter code: 4-hydroxy-3-methylbut-2-enyl diphosphate reductase (379 aa).

Cysteine 39 is a [4Fe-4S] cluster binding site. Histidine 69 provides a ligand contact to (2E)-4-hydroxy-3-methylbut-2-enyl diphosphate. Dimethylallyl diphosphate is bound at residue histidine 69. Isopentenyl diphosphate is bound at residue histidine 69. Cysteine 130 lines the [4Fe-4S] cluster pocket. A (2E)-4-hydroxy-3-methylbut-2-enyl diphosphate-binding site is contributed by histidine 158. Histidine 158 is a binding site for dimethylallyl diphosphate. Isopentenyl diphosphate is bound at residue histidine 158. Glutamate 160 (proton donor) is an active-site residue. Threonine 223 contacts (2E)-4-hydroxy-3-methylbut-2-enyl diphosphate. Residue cysteine 261 participates in [4Fe-4S] cluster binding. (2E)-4-hydroxy-3-methylbut-2-enyl diphosphate-binding residues include serine 290, serine 291, asparagine 292, and serine 352. 4 residues coordinate dimethylallyl diphosphate: serine 290, serine 291, asparagine 292, and serine 352. The isopentenyl diphosphate site is built by serine 290, serine 291, asparagine 292, and serine 352.

It belongs to the IspH family. It depends on [4Fe-4S] cluster as a cofactor.

The enzyme catalyses isopentenyl diphosphate + 2 oxidized [2Fe-2S]-[ferredoxin] + H2O = (2E)-4-hydroxy-3-methylbut-2-enyl diphosphate + 2 reduced [2Fe-2S]-[ferredoxin] + 2 H(+). The catalysed reaction is dimethylallyl diphosphate + 2 oxidized [2Fe-2S]-[ferredoxin] + H2O = (2E)-4-hydroxy-3-methylbut-2-enyl diphosphate + 2 reduced [2Fe-2S]-[ferredoxin] + 2 H(+). Its pathway is isoprenoid biosynthesis; dimethylallyl diphosphate biosynthesis; dimethylallyl diphosphate from (2E)-4-hydroxy-3-methylbutenyl diphosphate: step 1/1. It functions in the pathway isoprenoid biosynthesis; isopentenyl diphosphate biosynthesis via DXP pathway; isopentenyl diphosphate from 1-deoxy-D-xylulose 5-phosphate: step 6/6. Its function is as follows. Catalyzes the conversion of 1-hydroxy-2-methyl-2-(E)-butenyl 4-diphosphate (HMBPP) into a mixture of isopentenyl diphosphate (IPP) and dimethylallyl diphosphate (DMAPP). Acts in the terminal step of the DOXP/MEP pathway for isoprenoid precursor biosynthesis. This chain is 4-hydroxy-3-methylbut-2-enyl diphosphate reductase, found in Synechocystis sp. (strain ATCC 27184 / PCC 6803 / Kazusa).